Consider the following 512-residue polypeptide: Maturase K (512 aa).

This sequence belongs to the intron maturase 2 family. MatK subfamily.

The protein localises to the plastid. The protein resides in the chloroplast. Usually encoded in the trnK tRNA gene intron. Probably assists in splicing its own and other chloroplast group II introns. The polypeptide is Maturase K (Wolffiella gladiata (Florida mud-midget)).